A 458-amino-acid polypeptide reads, in one-letter code: ATP synthase subunit beta (458 aa).

148–155 contacts ATP; the sequence is GGAGVGKT.

The protein belongs to the ATPase alpha/beta chains family. F-type ATPases have 2 components, CF(1) - the catalytic core - and CF(0) - the membrane proton channel. CF(1) has five subunits: alpha(3), beta(3), gamma(1), delta(1), epsilon(1). CF(0) has three main subunits: a(1), b(2) and c(9-12). The alpha and beta chains form an alternating ring which encloses part of the gamma chain. CF(1) is attached to CF(0) by a central stalk formed by the gamma and epsilon chains, while a peripheral stalk is formed by the delta and b chains.

The protein resides in the cell inner membrane. It carries out the reaction ATP + H2O + 4 H(+)(in) = ADP + phosphate + 5 H(+)(out). Produces ATP from ADP in the presence of a proton gradient across the membrane. The catalytic sites are hosted primarily by the beta subunits. This chain is ATP synthase subunit beta, found in Shewanella loihica (strain ATCC BAA-1088 / PV-4).